The chain runs to 429 residues: Actin-like protein 6A (429 aa).

At Ser-2 the chain carries N-acetylserine. Lys-62 participates in a covalent cross-link: Glycyl lysine isopeptide (Lys-Gly) (interchain with G-Cter in SUMO2). Phosphoserine is present on residues Ser-86 and Ser-233.

It belongs to the actin family. Component of numerous complexes with chromatin remodeling and histone acetyltransferase activity. Component of the NuA4 histone acetyltransferase complex which contains the catalytic subunit KAT5/TIP60 and the subunits EP400, TRRAP/PAF400, BRD8/SMAP, EPC1, DMAP1/DNMAP1, RUVBL1/TIP49, RUVBL2, ING3, actin, ACTL6A/BAF53A, MORF4L1/MRG15, MORF4L2/MRGX, MRGBP, YEATS4/GAS41, VPS72/YL1 and MEAF6. The NuA4 complex interacts with MYC and the adenovirus E1A protein. Component of a NuA4-related complex which contains EP400, TRRAP/PAF400, SRCAP, BRD8/SMAP, EPC1, DMAP1/DNMAP1, RUVBL1/TIP49, RUVBL2, actin, ACTL6A/BAF53A, VPS72 and YEATS4/GAS41. Component of the multiprotein chromatin-remodeling complexes SWI/SNF: SWI/SNF-A (BAF), SWI/SNF-B (PBAF) and related complexes. The canonical complex contains a catalytic subunit (either SMARCA4/BRG1/BAF190A or SMARCA2/BRM/BAF190B) and at least SMARCE1, ACTL6A/BAF53, SMARCC1/BAF155, SMARCC2/BAF170, and SMARCB1/SNF5/BAF47. Other subunits specific to each of the complexes may also be present permitting several possible combinations developmentally and tissue specific. Component of the BAF complex, which includes at least actin (ACTB), ARID1A/BAF250A, ARID1B/BAF250B, SMARCA2/BRM, SMARCA4/BRG1/BAF190A, ACTL6A/BAF53, ACTL6B/BAF53B, SMARCE1/BAF57, SMARCC1/BAF155, SMARCC2/BAF170, SMARCB1/SNF5/INI1, and one or more SMARCD1/BAF60A, SMARCD2/BAF60B, or SMARCD3/BAF60C. In muscle cells, the BAF complex also contains DPF3. Component of the BAF53 complex, at least composed of ACTL6A/BAF53A, RUVBL1/TIP49, SMARCA2/BRM/BAF190B and TRRAP/PAF400, and which may also include a HAT activity related to, but distinct from, that of KAT5. Component of neural progenitors-specific chromatin remodeling complex (npBAF complex) composed of at least, ARID1A/BAF250A or ARID1B/BAF250B, SMARCD1/BAF60A, SMARCD3/BAF60C, SMARCA2/BRM/BAF190B, SMARCA4/BRG1/BAF190A, SMARCB1/BAF47, SMARCC1/BAF155, SMARCE1/BAF57, SMARCC2/BAF170, PHF10/BAF45A, ACTL6A/BAF53A and actin. Component of SWI/SNF (GBAF) subcomplex, which includes at least BICRA or BICRAL (mutually exclusive), BRD9, SS18, SMARCA2/BRM, SMARCA4/BRG1/BAF190A, ACTL6A/BAF53, SMARCC1/BAF155, and SMARCD1/BAF60A. May be a component of the SWI/SNF-B (PBAF) chromatin remodeling complex, at least composed of SMARCA4/BRG1, SMARCB1/BAF47/SNF5, ACTL6A/BAF53A or ACTL6B/BAF53B, SMARCE1/BAF57, SMARCD1/BAF60A, SMARCD2/BAF60B, perhaps SMARCD3/BAF60C, SMARCC1/BAF155, SMARCC2/BAF170, PBRM1/BAF180, ARID2/BAF200 and actin. Interacts with SMARCA4/BRG1/BAF190A. Interacts with PHF10/BAF45A. Component of the chromatin remodeling INO80 complex; specifically part of a complex module associated with the DBINO domain of INO80. Interacts with DPF2. Widely expressed. Expressed selectively in neural stem and progenitor cells (at protein level).

The protein localises to the nucleus. Its function is as follows. Involved in transcriptional activation and repression of select genes by chromatin remodeling (alteration of DNA-nucleosome topology). Component of SWI/SNF chromatin remodeling complexes that carry out key enzymatic activities, changing chromatin structure by altering DNA-histone contacts within a nucleosome in an ATP-dependent manner. Required for maximal ATPase activity of SMARCA4/BRG1/BAF190A and for association of the SMARCA4/BRG1/BAF190A containing remodeling complex BAF with chromatin/nuclear matrix. Belongs to the neural progenitors-specific chromatin remodeling complex (npBAF complex) and is required for the proliferation of neural progenitors. During neural development a switch from a stem/progenitor to a postmitotic chromatin remodeling mechanism occurs as neurons exit the cell cycle and become committed to their adult state. The transition from proliferating neural stem/progenitor cells to postmitotic neurons requires a switch in subunit composition of the npBAF and nBAF complexes. As neural progenitors exit mitosis and differentiate into neurons, npBAF complexes which contain ACTL6A/BAF53A and PHF10/BAF45A, are exchanged for homologous alternative ACTL6B/BAF53B and DPF1/BAF45B or DPF3/BAF45C subunits in neuron-specific complexes (nBAF). The npBAF complex is essential for the self-renewal/proliferative capacity of the multipotent neural stem cells. The nBAF complex along with CREST plays a role regulating the activity of genes essential for dendrite growth. Component of the NuA4 histone acetyltransferase (HAT) complex which is involved in transcriptional activation of select genes principally by acetylation of nucleosomal histones H4 and H2A. This modification may both alter nucleosome - DNA interactions and promote interaction of the modified histones with other proteins which positively regulate transcription. This complex may be required for the activation of transcriptional programs associated with oncogene and proto-oncogene mediated growth induction, tumor suppressor mediated growth arrest and replicative senescence, apoptosis, and DNA repair. NuA4 may also play a direct role in DNA repair when recruited to sites of DNA damage. Putative core component of the chromatin remodeling INO80 complex which is involved in transcriptional regulation, DNA replication and probably DNA repair. The chain is Actin-like protein 6A (Actl6a) from Mus musculus (Mouse).